We begin with the raw amino-acid sequence, 198 residues long: MGQQFTNAEGEQTEIDVAELQEWYKKFVVECPSGTLFMHEFKRFFGVQDNHEAAEYIENMFRAFDKNGDNTIDFLEYVAALNLVLRGKLEHKLRWTFKVYDKDGNGCIDKPELLEIVESIYKLKKVCRSEVEERTPLLTPEEVVDRIFQLVDENGDGQLSLDEFIDGARKDKWVMKMLQMDVNPGGWISEQRRKSALF.

Residue glycine 2 is the site of N-myristoyl glycine attachment. 4 consecutive EF-hand domains span residues 16 to 51, 52 to 87, 88 to 123, and 139 to 174; these read DVAELQEWYKKFVVECPSGTLFMHEFKRFFGVQDNH, EAAEYIENMFRAFDKNGDNTIDFLEYVAALNLVLRG, KLEHKLRWTFKVYDKDGNGCIDKPELLEIVESIYKL, and TPEEVVDRIFQLVDENGDGQLSLDEFIDGARKDKWV. Aspartate 65, asparagine 67, aspartate 69, threonine 71, glutamate 76, aspartate 101, aspartate 103, asparagine 105, cysteine 107, glutamate 112, aspartate 152, asparagine 154, aspartate 156, glutamine 158, and glutamate 163 together coordinate Ca(2+).

As to quaternary structure, undergoes dimerization at low calcium ions concentration, while the presence of calcium ions inhibits its dimerization. Dimerization correlates with its ability to activate GC. In terms of tissue distribution, retina and pineal gland.

In terms of biological role, stimulates synthesis of cGMP in photoreceptors. Thought to mediate Ca(2+)-sensitive regulation of retinal guanylyl cyclase (GC), a key event in recovery of the dark state of rod photoreceptors following light exposure. The protein is Guanylyl cyclase-activating protein 2 (GUCA1B) of Gallus gallus (Chicken).